The chain runs to 244 residues: Complement C1q subcomponent subunit A (244 aa).

The first 22 residues, 1-22, serve as a signal peptide directing secretion; sequence MEAPRGWLVISVLAISLASSVT. Residues 28 to 94 are disordered; it reads APDGTHGSAG…PGPSGPMGPA (67 aa). Residues 31–109 form the Collagen-like domain; sequence GTHGSAGIPG…KGTKGSPGNI (79 aa). A 4-hydroxyproline mark is found at P39 and P45. Position 48 is a 5-hydroxylysine (K48). K48 is a glycosylation site (O-linked (Gal...) hydroxylysine). A 4-hydroxyproline mark is found at P54 and P57. K67 bears the 5-hydroxylysine mark. Residue K67 is glycosylated (O-linked (Gal...) hydroxylysine). 4-hydroxyproline is present on residues P73, P79, and P85. Over residues 79 to 94 the composition is skewed to low complexity; it reads PGRMGYPGPSGPMGPA. 5-hydroxylysine is present on K100. K100 carries an O-linked (Gal...) hydroxylysine glycan. Residues 110–244 form the C1q domain; the sequence is KDQPRPAFSA…FSGFLIFPSA (135 aa). Residue N146 is glycosylated (N-linked (GlcNAc...) asparagine). C172 and C189 are joined by a disulfide. Q198 serves as a coordination point for Ca(2+).

As to quaternary structure, core component of the complement C1 complex, a calcium-dependent complex composed of 1 molecule of the C1Q subcomplex, 2 molecules of C1R and 2 molecules of C1S. The C1Q subcomplex is composed 18 subunits: 3 chains of C1QA, C1QB, and C1QC trimerize to form 6 collagen-like triple helices connected to six globular ligand-recognition modules (C1q domain). Interacts with CR1 (via Sushi 24 and Sushi 25 domains). Interacts (via C-terminus) with CD33; this interaction activates CD33 inhibitory motifs. Post-translationally, O-linked glycans are assumed to be the Glc-Gal disaccharides typically found as secondary modifications of hydroxylated lysines in collagen-like domains.

The protein localises to the secreted. Its subcellular location is the cell surface. With respect to regulation, the C1Q subcomplex is inhibited by sulfated molecules, such as triterpenoid sulfates, heparan sulfate, or chondroitin sulfates. Its function is as follows. Core component of the complement C1 complex, a multiprotein complex that initiates the classical pathway of the complement system, a cascade of proteins that leads to phagocytosis and breakdown of pathogens and signaling that strengthens the adaptive immune system. The classical complement pathway is initiated by the C1Q subcomplex of the C1 complex, which specifically binds IgG or IgM immunoglobulins complexed with antigens, forming antigen-antibody complexes on the surface of pathogens: C1QA, together with C1QB and C1QC, specifically recognizes and binds the Fc regions of IgG or IgM via its C1q domain. Immunoglobulin-binding activates the proenzyme C1R, which cleaves C1S, initiating the proteolytic cascade of the complement system. The C1Q subcomplex is activated by a hexamer of IgG complexed with antigens, while it is activated by a pentameric IgM. The C1Q subcomplex also recognizes and binds phosphatidylserine exposed on the surface of cells undergoing programmed cell death, possibly promoting activation of the complement system. The protein is Complement C1q subcomponent subunit A (C1QA) of Bos taurus (Bovine).